The primary structure comprises 395 residues: Syncephapepsin (395 aa).

Residues 1-19 (MKFSLALLATVALATISQA) form the signal peptide. Positions 20 to 71 (APVEKQVAGKPFQLVKNPHYQANATRAIFRAEKKYARHTAIPEQGKTIVKSA) are cleaved as a propeptide — activation peptide. In terms of domain architecture, Peptidase A1 spans 89–391 (YYATVSVGTP…NQGVPEVQIA (303 aa)). The active site involves aspartate 107. Cysteine 120 and cysteine 123 are joined by a disulfide. Aspartate 288 is a catalytic residue. Cysteine 322 and cysteine 355 are joined by a disulfide.

This sequence belongs to the peptidase A1 family. In terms of assembly, monomer.

Its function is as follows. Hydrolysis of proteins with a broad specificity. Residues recognized to be cleaved were primarily those of trypsin and chymotrypsin and Lys was the most susceptible. This is Syncephapepsin (SPSR) from Syncephalastrum racemosum (Filamentous fungus).